The primary structure comprises 284 residues: MFIISSKNMLQKAQHAGYAVPAFNIHNLETLQVVVETAAEMRSPLIVAGTPGTFSYAGMGNIVAIAGDLAREYNLPLAIHLDHHESLADIESKVMAGIRSVMIDGSHFPFEENVALVKSVVDFCHRYDTSVEAELGRLGGIEDDLVVDSKDALYTNPQQAREFVAHTGIDSLAVAIGTAHGMYAAEPKLDFERLAEIRALVDIPLVLHGASGLPESDIRQAISLGVCKVNVATELKIAFSDALKEYFLQNPKANDPRHYMQPAKQAMKEVVRKVIHVCGCEGQL.

Catalysis depends on aspartate 82, which acts as the Proton donor. Residues histidine 83 and histidine 180 each coordinate Zn(2+). Glycine 181 provides a ligand contact to dihydroxyacetone phosphate. A Zn(2+)-binding site is contributed by histidine 208. Residues 209-211 (GAS) and 230-233 (NVAT) contribute to the dihydroxyacetone phosphate site.

It belongs to the class II fructose-bisphosphate aldolase family. TagBP aldolase GatY subfamily. In terms of assembly, forms a complex with GatZ. Requires Zn(2+) as cofactor.

The catalysed reaction is D-tagatofuranose 1,6-bisphosphate = D-glyceraldehyde 3-phosphate + dihydroxyacetone phosphate. Its pathway is carbohydrate metabolism; D-tagatose 6-phosphate degradation; D-glyceraldehyde 3-phosphate and glycerone phosphate from D-tagatose 6-phosphate: step 2/2. In terms of biological role, catalytic subunit of the tagatose-1,6-bisphosphate aldolase GatYZ, which catalyzes the reversible aldol condensation of dihydroxyacetone phosphate (DHAP or glycerone-phosphate) with glyceraldehyde 3-phosphate (G3P) to produce tagatose 1,6-bisphosphate (TBP). Requires GatZ subunit for full activity and stability. Is involved in the catabolism of galactitol. The chain is D-tagatose-1,6-bisphosphate aldolase subunit GatY from Salmonella paratyphi B (strain ATCC BAA-1250 / SPB7).